A 101-amino-acid polypeptide reads, in one-letter code: uncharacterized protein (101 aa).

This is an uncharacterized protein from Haemophilus influenzae (strain ATCC 51907 / DSM 11121 / KW20 / Rd).